We begin with the raw amino-acid sequence, 432 residues long: Lecithin-cholesterol acyltransferase-like 1 (432 aa).

A helical transmembrane segment spans residues 7 to 29 (HYSVVIAILVVVTMTSMCQAVGS). S209 (acyl-ester intermediate) is an active-site residue. Active-site charge relay system residues include D374 and H400.

The protein belongs to the AB hydrolase superfamily. Lipase family.

The protein localises to the membrane. This Arabidopsis thaliana (Mouse-ear cress) protein is Lecithin-cholesterol acyltransferase-like 1 (LCAT1).